Reading from the N-terminus, the 269-residue chain is 3-ketodihydrosphingosine reductase (269 aa).

NADPH-binding residues include glycine 10, serine 12, serine 13, glycine 14, lysine 36, and aspartate 50. The GXSXG motif lies at 10 to 14 (GASSG). Residue serine 12 is the Nucleophile; for lipase activity of the active site. Serine 128 functions as the Proton donor in the catalytic mechanism. The active-site Proton acceptor is the tyrosine 142. The NADP(+) site is built by tyrosine 142 and lysine 146. NADPH contacts are provided by residues 142 to 146 (YSASK) and 175 to 177 (FNT). The active site involves lysine 146. The active-site Lowers pKa of active site Tyr is the lysine 146.

It belongs to the short-chain dehydrogenases/reductases (SDR) family.

The catalysed reaction is sphinganine + NADP(+) = 3-oxosphinganine + NADPH + H(+). The protein operates within lipid metabolism; sphingolipid metabolism. Functionally, catalyzes the reduction of 3'-oxosphinganine (3-ketodihydrosphingosine/KDS) to sphinganine (dihydrosphingosine/DHS), the second step of de novo sphingolipid biosynthesis. This is 3-ketodihydrosphingosine reductase from Bacteroides thetaiotaomicron (strain ATCC 29148 / DSM 2079 / JCM 5827 / CCUG 10774 / NCTC 10582 / VPI-5482 / E50).